We begin with the raw amino-acid sequence, 258 residues long: Acyl-[acyl-carrier-protein]--UDP-N-acetylglucosamine O-acyltransferase (258 aa).

Belongs to the transferase hexapeptide repeat family. LpxA subfamily. As to quaternary structure, homotrimer.

Its subcellular location is the cytoplasm. The enzyme catalyses a (3R)-hydroxyacyl-[ACP] + UDP-N-acetyl-alpha-D-glucosamine = a UDP-3-O-[(3R)-3-hydroxyacyl]-N-acetyl-alpha-D-glucosamine + holo-[ACP]. Its pathway is glycolipid biosynthesis; lipid IV(A) biosynthesis; lipid IV(A) from (3R)-3-hydroxytetradecanoyl-[acyl-carrier-protein] and UDP-N-acetyl-alpha-D-glucosamine: step 1/6. Functionally, involved in the biosynthesis of lipid A, a phosphorylated glycolipid that anchors the lipopolysaccharide to the outer membrane of the cell. This is Acyl-[acyl-carrier-protein]--UDP-N-acetylglucosamine O-acyltransferase from Stutzerimonas stutzeri (strain A1501) (Pseudomonas stutzeri).